A 181-amino-acid chain; its full sequence is ATP synthase subunit delta (181 aa).

It belongs to the ATPase delta chain family. F-type ATPases have 2 components, F(1) - the catalytic core - and F(0) - the membrane proton channel. F(1) has five subunits: alpha(3), beta(3), gamma(1), delta(1), epsilon(1). F(0) has three main subunits: a(1), b(2) and c(10-14). The alpha and beta chains form an alternating ring which encloses part of the gamma chain. F(1) is attached to F(0) by a central stalk formed by the gamma and epsilon chains, while a peripheral stalk is formed by the delta and b chains.

It is found in the cell membrane. Its function is as follows. F(1)F(0) ATP synthase produces ATP from ADP in the presence of a proton or sodium gradient. F-type ATPases consist of two structural domains, F(1) containing the extramembraneous catalytic core and F(0) containing the membrane proton channel, linked together by a central stalk and a peripheral stalk. During catalysis, ATP synthesis in the catalytic domain of F(1) is coupled via a rotary mechanism of the central stalk subunits to proton translocation. Functionally, this protein is part of the stalk that links CF(0) to CF(1). It either transmits conformational changes from CF(0) to CF(1) or is implicated in proton conduction. This Desulforamulus reducens (strain ATCC BAA-1160 / DSM 100696 / MI-1) (Desulfotomaculum reducens) protein is ATP synthase subunit delta.